Reading from the N-terminus, the 493-residue chain is Aspartyl/glutamyl-tRNA(Asn/Gln) amidotransferase subunit B (493 aa).

It belongs to the GatB/GatE family. GatB subfamily. In terms of assembly, heterotrimer of A, B and C subunits.

It carries out the reaction L-glutamyl-tRNA(Gln) + L-glutamine + ATP + H2O = L-glutaminyl-tRNA(Gln) + L-glutamate + ADP + phosphate + H(+). The catalysed reaction is L-aspartyl-tRNA(Asn) + L-glutamine + ATP + H2O = L-asparaginyl-tRNA(Asn) + L-glutamate + ADP + phosphate + 2 H(+). Allows the formation of correctly charged Asn-tRNA(Asn) or Gln-tRNA(Gln) through the transamidation of misacylated Asp-tRNA(Asn) or Glu-tRNA(Gln) in organisms which lack either or both of asparaginyl-tRNA or glutaminyl-tRNA synthetases. The reaction takes place in the presence of glutamine and ATP through an activated phospho-Asp-tRNA(Asn) or phospho-Glu-tRNA(Gln). The sequence is that of Aspartyl/glutamyl-tRNA(Asn/Gln) amidotransferase subunit B from Aromatoleum aromaticum (strain DSM 19018 / LMG 30748 / EbN1) (Azoarcus sp. (strain EbN1)).